The primary structure comprises 137 residues: Methylmalonyl-CoA decarboxylase subunit delta (137 aa).

Residues 30–50 (VTVVLGMGITVVALIFLMYII) form a helical membrane-spanning segment.

Belongs to the OadG family. As to quaternary structure, the methylmalonyl-CoA decarboxylase is composed of four subunits: the carboxyltransferase alpha subunit (MmdA), the tunnel beta subunit (MmdB), the biotin-containing gamma subunit (MmdC) and the delta subunit (MmdD).

Its subcellular location is the cell membrane. The enzyme catalyses (S)-methylmalonyl-CoA + Na(+)(in) + H(+)(out) = propanoyl-CoA + Na(+)(out) + CO2. Its function is as follows. Subunit of the sodium ion pump methylmalonyl-CoA decarboxylase, which converts the chemical energy of a decarboxylation reaction into an electrochemical gradient of Na(+) ions across the cytoplasmic membrane, thereby creating a sodium ion motive force that is used for ATP synthesis. The delta subunit is required for catalytic activity as well as for the proper assembly of the individual subunits to an enzyme complex. In Propionigenium modestum, this protein is Methylmalonyl-CoA decarboxylase subunit delta.